The primary structure comprises 110 residues: Small ribosomal subunit protein bS16 (110 aa).

The disordered stretch occupies residues 87-110 (ARNNPEKAVPRKERKAAAEAAAKK).

It belongs to the bacterial ribosomal protein bS16 family.

This Rhodopseudomonas palustris (strain BisA53) protein is Small ribosomal subunit protein bS16.